Consider the following 274-residue polypeptide: Phloretin hydrolase (274 aa).

Zn(2+) is bound by residues histidine 123, glutamate 154, histidine 251, and glutamate 255.

This sequence belongs to the DAPG/phloretin hydrolase family. In terms of assembly, homodimer. The cofactor is Zn(2+).

The protein localises to the cytoplasm. The enzyme catalyses phloretin + H2O = phloretate + 1,3,5-trihydroxybenzene + H(+). Functionally, catalyzes the hydrolytic C-C cleavage of phloretin to phloroglucinol and 3-(4-hydroxyphenyl)propionic acid during flavonoid degradation. Also hydrolyzes other C-acylated phenols. This is Phloretin hydrolase (phy) from Eubacterium ramulus.